Consider the following 473-residue polypeptide: Photosystem II CP43 reaction center protein (473 aa).

The propeptide occupies 1 to 14 (MKTLYSLRRFSHVE). T15 carries the post-translational modification N-acetylthreonine. The residue at position 15 (T15) is a Phosphothreonine. Helical transmembrane passes span 69–93 (LFEV…PHLA), 134–155 (LLGP…KDRN), 178–200 (KALY…RKIT), 255–275 (KPFA…LSYS), and 291–312 (WFNN…ASQA). A [CaMn4O5] cluster-binding site is contributed by E367. Residues 447-471 (RARAAAAGFEKGIDRDFEPVLSMTP) traverse the membrane as a helical segment.

It belongs to the PsbB/PsbC family. PsbC subfamily. PSII is composed of 1 copy each of membrane proteins PsbA, PsbB, PsbC, PsbD, PsbE, PsbF, PsbH, PsbI, PsbJ, PsbK, PsbL, PsbM, PsbT, PsbX, PsbY, PsbZ, Psb30/Ycf12, at least 3 peripheral proteins of the oxygen-evolving complex and a large number of cofactors. It forms dimeric complexes. Requires Binds multiple chlorophylls and provides some of the ligands for the Ca-4Mn-5O cluster of the oxygen-evolving complex. It may also provide a ligand for a Cl- that is required for oxygen evolution. PSII binds additional chlorophylls, carotenoids and specific lipids. as cofactor.

The protein resides in the plastid membrane. In terms of biological role, one of the components of the core complex of photosystem II (PSII). It binds chlorophyll and helps catalyze the primary light-induced photochemical processes of PSII. PSII is a light-driven water:plastoquinone oxidoreductase, using light energy to abstract electrons from H(2)O, generating O(2) and a proton gradient subsequently used for ATP formation. This is Photosystem II CP43 reaction center protein from Cuscuta gronovii (Common dodder).